The primary structure comprises 122 residues: Large ribosomal subunit protein uL14 (122 aa).

The protein belongs to the universal ribosomal protein uL14 family. In terms of assembly, part of the 50S ribosomal subunit. Forms a cluster with proteins L3 and L19. In the 70S ribosome, L14 and L19 interact and together make contacts with the 16S rRNA in bridges B5 and B8.

In terms of biological role, binds to 23S rRNA. Forms part of two intersubunit bridges in the 70S ribosome. This Heliobacterium modesticaldum (strain ATCC 51547 / Ice1) protein is Large ribosomal subunit protein uL14.